The chain runs to 260 residues: Ribosomal RNA small subunit methyltransferase J (260 aa).

S-adenosyl-L-methionine contacts are provided by residues 108–109 (RD), 124–125 (ER), and D178.

This sequence belongs to the methyltransferase superfamily. RsmJ family.

Its subcellular location is the cytoplasm. The enzyme catalyses guanosine(1516) in 16S rRNA + S-adenosyl-L-methionine = N(2)-methylguanosine(1516) in 16S rRNA + S-adenosyl-L-homocysteine + H(+). Functionally, specifically methylates the guanosine in position 1516 of 16S rRNA. The polypeptide is Ribosomal RNA small subunit methyltransferase J (Ectopseudomonas mendocina (strain ymp) (Pseudomonas mendocina)).